A 472-amino-acid chain; its full sequence is Serine incorporator 3 (472 aa).

Residues 1–96 are Extracellular-facing; it reads MGAVLGVFSL…KDCDVLVGFK (96 aa). Residue Asn34 is glycosylated (N-linked (GlcNAc...) asparagine). The helical transmembrane segment at 97 to 117 threads the bilayer; sequence AVYRINFAVAIFFFAFFLLML. Residues 118 to 132 are Cytoplasmic-facing; that stretch reads KVKTSKDPRAAVHNG. A helical transmembrane segment spans residues 133–153; it reads FWFFKIAAIIGIMIGSFYIPG. At 154–158 the chain is on the extracellular side; sequence GSFTE. A helical transmembrane segment spans residues 159–179; the sequence is VWFVAGMLGASFFIIIQLVLL. At 180 to 206 the chain is on the cytoplasmic side; sequence VDMAHSWNELWVNRMEEGNPRLWYAAL. The helical transmembrane segment at 207 to 227 threads the bilayer; sequence LSFTSLFYILSIVFAALLYVF. Residues 228-238 lie on the Extracellular side of the membrane; that stretch reads YTKPDDCTENK. A helical transmembrane segment spans residues 239-259; that stretch reads VFISLNLIFCVAVSIVSILPK. Topologically, residues 260–329 are cytoplasmic; it reads VQEHQPRSGL…APAYAPPSQS (70 aa). Residues 330 to 350 form a helical membrane-spanning segment; that stretch reads GHFMNLDDIWGLIIFVFCLIY. Over 351–405 the chain is Extracellular; that stretch reads SSFRTSSNSQVNKLTLSGSDSVILGDTTNGANDEEDGQPRRAVDNEKEGVQYSYS. Phosphoserine is present on Ser371. The chain crosses the membrane as a helical span at residues 406–426; sequence FFHLMLCCASLYIMMTITSWY. The Cytoplasmic segment spans residues 427–445; it reads SPDAKFQKVSSKWLAVWFK. A helical membrane pass occupies residues 446 to 466; the sequence is MGSSWLCLLLYLWTLVAPLVL. The Extracellular portion of the chain corresponds to 467–472; the sequence is TGRDFS.

It belongs to the TDE1 family. Post-translationally, N-glycosylated. Highly expressed in the neuronal populations such as Purkinje cells in the cerebellum, brainstem and spinal motor neurons, locus coeruleus and raphe nuclei. Highly expressed also in thymus, kidney liver and testis.

It localises to the cell membrane. Its subcellular location is the golgi apparatus membrane. It catalyses the reaction a 1,2-diacyl-sn-glycero-3-phospho-L-serine(in) = a 1,2-diacyl-sn-glycero-3-phospho-L-serine(out). The catalysed reaction is a 1,2-diacyl-sn-glycero-3-phosphocholine(in) = a 1,2-diacyl-sn-glycero-3-phosphocholine(out). It carries out the reaction a 1,2-diacyl-sn-glycero-3-phosphoethanolamine(in) = a 1,2-diacyl-sn-glycero-3-phosphoethanolamine(out). Functionally, restriction factor required to restrict infectivity of gammaretroviruses: acts by inhibiting an early step of viral infection. Impairs the penetration of the viral particle into the cytoplasm. Non-ATP-dependent, non-specific lipid transporter for phosphatidylserine, phosphatidylcholine, and phosphatidylethanolamine. Functions as a scramblase that flips lipids in both directions across the membrane. Phospholipid scrambling results in gammaretroviral surface exposure of phosphatidylserine and loss of membrane asymmetry, which leads to loss of infectivity. The chain is Serine incorporator 3 (Serinc3) from Mus musculus (Mouse).